We begin with the raw amino-acid sequence, 741 residues long: Polyribonucleotide nucleotidyltransferase (741 aa).

Residues aspartate 489 and aspartate 495 each coordinate Mg(2+). In terms of domain architecture, KH spans 556-615 (PKIDSIQIPVDKIKVVIGKGGETIDKIIAETGVTIDIDEEGLVQIFSSDQDAIDRAKTII). An S1 motif domain is found at 625 to 693 (GEVYTVPVVR…EKGRVDASIK (69 aa)). Positions 696-741 (LPKPEKNEDGENGEEHRHCCCSHHKPDHHSESMEAPKKSDESETKE) are disordered. Composition is skewed to basic and acidic residues over residues 698–713 (KPEK…EHRH) and 723–741 (HHSE…ETKE).

The protein belongs to the polyribonucleotide nucleotidyltransferase family. Mg(2+) is required as a cofactor.

It localises to the cytoplasm. It catalyses the reaction RNA(n+1) + phosphate = RNA(n) + a ribonucleoside 5'-diphosphate. Its function is as follows. Involved in mRNA degradation. Catalyzes the phosphorolysis of single-stranded polyribonucleotides processively in the 3'- to 5'-direction. This Streptococcus thermophilus (strain ATCC BAA-491 / LMD-9) protein is Polyribonucleotide nucleotidyltransferase.